Consider the following 110-residue polypeptide: uncharacterized protein (110 aa).

Residues 1–16 (MSVKLKYDKIDQRNGD) show a composition bias toward basic and acidic residues. Disordered regions lie at residues 1 to 29 (MSVK…GNGN) and 73 to 100 (IKQQ…ESPN). Residues 20-29 (GNHNNCGNGN) show a composition bias toward low complexity.

This is an uncharacterized protein from Dictyostelium discoideum (Social amoeba).